A 128-amino-acid chain; its full sequence is Small ribosomal subunit protein eS8 (128 aa).

The protein belongs to the eukaryotic ribosomal protein eS8 family. Part of the 30S ribosomal subunit.

The sequence is that of Small ribosomal subunit protein eS8 from Methanococcus maripaludis (strain C7 / ATCC BAA-1331).